We begin with the raw amino-acid sequence, 460 residues long: Armadillo repeat-containing protein LFR (460 aa).

Positions 1–30 (MQKRELGKSGGNSGGSSGPPAKRGRPFGST) are disordered. Positions 8–17 (KSGGNSGGSS) are enriched in gly residues. 3 ARM repeats span residues 227 to 269 (DNEV…NLAH), 323 to 362 (NEPF…NLVE), and 366 to 407 (DCRL…NLVS).

As to quaternary structure, interacts with AS2. In terms of tissue distribution, expressed in roots, leaves, stems and flowers.

It is found in the nucleus. Functionally, involved in leaf and flower development. Plays roles in leaf development partly by associating with AS2 and repressing KNAT1/BP transcription. Required for the formation of anther cell layers and normal expression of genes that regulates anther development. This chain is Armadillo repeat-containing protein LFR, found in Arabidopsis thaliana (Mouse-ear cress).